A 126-amino-acid polypeptide reads, in one-letter code: Apolipoprotein C-IV (126 aa).

The signal sequence occupies residues 1-27 (MSLLRHRLQALPSLCLCVLVLACIGAC).

Belongs to the apolipoprotein C4 family.

It is found in the secreted. In terms of biological role, may participate in lipoprotein metabolism. This is Apolipoprotein C-IV (APOC4) from Aotus nancymaae (Ma's night monkey).